A 94-amino-acid polypeptide reads, in one-letter code: Co-chaperonin GroES (94 aa).

The protein belongs to the GroES chaperonin family. Heptamer of 7 subunits arranged in a ring. Interacts with the chaperonin GroEL.

Its subcellular location is the cytoplasm. Functionally, together with the chaperonin GroEL, plays an essential role in assisting protein folding. The GroEL-GroES system forms a nano-cage that allows encapsulation of the non-native substrate proteins and provides a physical environment optimized to promote and accelerate protein folding. GroES binds to the apical surface of the GroEL ring, thereby capping the opening of the GroEL channel. In Ehrlichia canis (strain Jake), this protein is Co-chaperonin GroES.